The primary structure comprises 187 residues: Large ribosomal subunit protein eL18A (187 aa).

S16 and S64 each carry phosphoserine. A phosphothreonine mark is found at T87, T89, and T134. Phosphoserine is present on S136. T138 bears the Phosphothreonine mark.

It belongs to the eukaryotic ribosomal protein eL18 family. As to quaternary structure, component of the large ribosomal subunit (LSU). Mature yeast ribosomes consist of a small (40S) and a large (60S) subunit. The 40S small subunit contains 1 molecule of ribosomal RNA (18S rRNA) and at least 33 different proteins. The large 60S subunit contains 3 rRNA molecules (25S, 5.8S and 5S rRNA) and at least 46 different proteins. eL18 interacts with NAP1.

It is found in the cytoplasm. Functionally, component of the ribosome, a large ribonucleoprotein complex responsible for the synthesis of proteins in the cell. The small ribosomal subunit (SSU) binds messenger RNAs (mRNAs) and translates the encoded message by selecting cognate aminoacyl-transfer RNA (tRNA) molecules. The large subunit (LSU) contains the ribosomal catalytic site termed the peptidyl transferase center (PTC), which catalyzes the formation of peptide bonds, thereby polymerizing the amino acids delivered by tRNAs into a polypeptide chain. The nascent polypeptides leave the ribosome through a tunnel in the LSU and interact with protein factors that function in enzymatic processing, targeting, and the membrane insertion of nascent chains at the exit of the ribosomal tunnel. This is Large ribosomal subunit protein eL18A (rpl1801) from Schizosaccharomyces pombe (strain 972 / ATCC 24843) (Fission yeast).